The chain runs to 180 residues: ATP-dependent protease subunit HslV (180 aa).

T5 is a catalytic residue. The Na(+) site is built by G161, C164, and T167.

This sequence belongs to the peptidase T1B family. HslV subfamily. A double ring-shaped homohexamer of HslV is capped on each side by a ring-shaped HslU homohexamer. The assembly of the HslU/HslV complex is dependent on binding of ATP.

It is found in the cytoplasm. The enzyme catalyses ATP-dependent cleavage of peptide bonds with broad specificity.. With respect to regulation, allosterically activated by HslU binding. Its function is as follows. Protease subunit of a proteasome-like degradation complex believed to be a general protein degrading machinery. In Campylobacter curvus (strain 525.92), this protein is ATP-dependent protease subunit HslV.